The sequence spans 165 residues: NADPH-dependent 7-cyano-7-deazaguanine reductase (165 aa).

Residue Cys56 is the Thioimide intermediate of the active site. Asp63 functions as the Proton donor in the catalytic mechanism. Residues 78-80 (VES) and 97-98 (HE) each bind substrate.

The protein belongs to the GTP cyclohydrolase I family. QueF type 1 subfamily.

It localises to the cytoplasm. It catalyses the reaction 7-aminomethyl-7-carbaguanine + 2 NADP(+) = 7-cyano-7-deazaguanine + 2 NADPH + 3 H(+). Its pathway is tRNA modification; tRNA-queuosine biosynthesis. In terms of biological role, catalyzes the NADPH-dependent reduction of 7-cyano-7-deazaguanine (preQ0) to 7-aminomethyl-7-deazaguanine (preQ1). The polypeptide is NADPH-dependent 7-cyano-7-deazaguanine reductase (Bacillus cytotoxicus (strain DSM 22905 / CIP 110041 / 391-98 / NVH 391-98)).